The sequence spans 93 residues: Small ribosomal subunit protein uS19 (93 aa).

It belongs to the universal ribosomal protein uS19 family.

Its function is as follows. Protein S19 forms a complex with S13 that binds strongly to the 16S ribosomal RNA. The protein is Small ribosomal subunit protein uS19 of Caldanaerobacter subterraneus subsp. tengcongensis (strain DSM 15242 / JCM 11007 / NBRC 100824 / MB4) (Thermoanaerobacter tengcongensis).